The following is a 188-amino-acid chain: Adenine phosphoribosyltransferase (188 aa).

The protein belongs to the purine/pyrimidine phosphoribosyltransferase family. As to quaternary structure, homodimer.

It is found in the cytoplasm. The catalysed reaction is AMP + diphosphate = 5-phospho-alpha-D-ribose 1-diphosphate + adenine. Its pathway is purine metabolism; AMP biosynthesis via salvage pathway; AMP from adenine: step 1/1. Its function is as follows. Catalyzes a salvage reaction resulting in the formation of AMP, that is energically less costly than de novo synthesis. In Burkholderia cenocepacia (strain HI2424), this protein is Adenine phosphoribosyltransferase.